The sequence spans 82 residues: Small ribosomal subunit protein bS18 (82 aa).

The disordered stretch occupies residues 1-20 (MVDINQIPTRRPFHRRRKTC).

It belongs to the bacterial ribosomal protein bS18 family. As to quaternary structure, part of the 30S ribosomal subunit. Forms a tight heterodimer with protein bS6.

Its function is as follows. Binds as a heterodimer with protein bS6 to the central domain of the 16S rRNA, where it helps stabilize the platform of the 30S subunit. This Brucella anthropi (strain ATCC 49188 / DSM 6882 / CCUG 24695 / JCM 21032 / LMG 3331 / NBRC 15819 / NCTC 12168 / Alc 37) (Ochrobactrum anthropi) protein is Small ribosomal subunit protein bS18.